Reading from the N-terminus, the 321-residue chain is uncharacterized protein (321 aa).

9 helical membrane-spanning segments follow: residues 10-28, 41-63, 94-111, 116-138, 143-165, 200-222, 237-259, 266-283, and 293-315; these read LWCSFGVFLIIIIIIEMSI, IALYSSCISMLTAILFDVLIWIY, NVAMWFFLFQLFSISMVH, LFYGTFLALVFRSSIIFFGVWLL, FLFYVLSIILLFTGIITILSNGV, NGVIVATPLFLVLILIELNDIIF, PFIIITSSFFSIIGLRSIYVILA, YIIKYGITLILIFISIKI, and IMLSSFFIVCILVACFIIEKFFF.

This sequence belongs to the TerC family.

It is found in the cell membrane. This is an uncharacterized protein from Buchnera aphidicola subsp. Baizongia pistaciae (strain Bp).